The primary structure comprises 473 residues: Phosphatidylserine synthase 1 (473 aa).

The Cytoplasmic segment spans residues 1-35 (MAACVGSRTLSKDDVNYRLHFRMINEQQVEDITLE). Residues 36 to 56 (FFYRPHTITLLSFTILSLMAF) traverse the membrane as a helical segment. At 57 to 72 (AFTRDDSVPEENIWRG) the chain is on the lumenal side. A helical transmembrane segment spans residues 73-93 (ILSVIFFFLIISVLAFPNGPF). Topologically, residues 94–102 (TRPHPAIWR) are cytoplasmic. Residues 103-123 (MVFGLSVLYFLFLVFVLFLNF) traverse the membrane as a helical segment. Topologically, residues 124-186 (EQVKAVMYWL…AMKALLIRSY (63 aa)) are lumenal. A helical transmembrane segment spans residues 187–207 (GLCWTISITWELTELFFMHLL). The Cytoplasmic segment spans residues 208–216 (PNFAECWWD). A helical transmembrane segment spans residues 217–237 (QVILDILLCNGGGIWLGMVVC). Residues 238–286 (RFLEMRTYHWASFKDIHTTTGKIKRAVLQFTPASWTYVRWFDPKSSFQR) are Lumenal-facing. The helical transmembrane segment at 287–307 (VAGIYLFMIIWQLTELNTFFL) threads the bilayer. Residues 308-319 (KHIFVFQASHPL) lie on the Cytoplasmic side of the membrane. The chain crosses the membrane as a helical span at residues 320–342 (SWGRILFIGIITAPTVRQYYAYL). Topologically, residues 343 to 355 (TDTQCKRVGTQCW) are lumenal. The helical transmembrane segment at 356-376 (VFGVIAFLEAIVCIKFGQDLF) threads the bilayer. Topologically, residues 377-380 (SKTQ) are cytoplasmic. The chain crosses the membrane as a helical span at residues 381–401 (ILYVVFWLLCVAFTTFLCLYG). Over 402-473 (MVWYAEYYGH…SKVTNGIGKK (72 aa)) the chain is Lumenal. The tract at residues 420–473 (EDSPYSPDASWLHSKFSKGADNSPPKHPVNSESHSSRRRNRHSRSKVTNGIGKK) is disordered. The segment covering 455–464 (SRRRNRHSRS) has biased composition (basic residues).

Belongs to the phosphatidyl serine synthase family.

The protein localises to the endoplasmic reticulum membrane. It carries out the reaction a 1,2-diacyl-sn-glycero-3-phosphoethanolamine + L-serine = a 1,2-diacyl-sn-glycero-3-phospho-L-serine + ethanolamine. It catalyses the reaction a 1,2-diacyl-sn-glycero-3-phosphocholine + L-serine = a 1,2-diacyl-sn-glycero-3-phospho-L-serine + choline. Its pathway is phospholipid metabolism; phosphatidylserine biosynthesis. Functionally, catalyzes a base-exchange reaction in which the polar head group of phosphatidylethanolamine (PE) or phosphatidylcholine (PC) is replaced by L-serine. Catalyzes mainly the conversion of phosphatidylcholine but also converts, in vitro and to a lesser extent, phosphatidylethanolamine. The sequence is that of Phosphatidylserine synthase 1 (PTDSS1) from Gallus gallus (Chicken).